Here is a 370-residue protein sequence, read N- to C-terminus: DNA polymerase IV (370 aa).

Positions 14–198 (IIHIDMDAFF…LPIEKFYGVG (185 aa)) constitute a UmuC domain. The Mg(2+) site is built by D18 and D116. E117 is a catalytic residue.

The protein belongs to the DNA polymerase type-Y family. As to quaternary structure, monomer. Requires Mg(2+) as cofactor.

It localises to the cytoplasm. It catalyses the reaction DNA(n) + a 2'-deoxyribonucleoside 5'-triphosphate = DNA(n+1) + diphosphate. Poorly processive, error-prone DNA polymerase involved in untargeted mutagenesis. Copies undamaged DNA at stalled replication forks, which arise in vivo from mismatched or misaligned primer ends. These misaligned primers can be extended by PolIV. Exhibits no 3'-5' exonuclease (proofreading) activity. May be involved in translesional synthesis, in conjunction with the beta clamp from PolIII. This chain is DNA polymerase IV, found in Streptococcus mutans serotype c (strain ATCC 700610 / UA159).